Here is a 238-residue protein sequence, read N- to C-terminus: tRNA (guanine-N(7)-)-methyltransferase (238 aa).

S-adenosyl-L-methionine is bound by residues Glu-68, Glu-93, Asp-120, and Asp-143. Asp-143 is a catalytic residue. Substrate-binding positions include Lys-147, Asp-179, and 216–219 (TKFE).

This sequence belongs to the class I-like SAM-binding methyltransferase superfamily. TrmB family. As to quaternary structure, monomer.

It carries out the reaction guanosine(46) in tRNA + S-adenosyl-L-methionine = N(7)-methylguanosine(46) in tRNA + S-adenosyl-L-homocysteine. Its pathway is tRNA modification; N(7)-methylguanine-tRNA biosynthesis. Catalyzes the formation of N(7)-methylguanine at position 46 (m7G46) in tRNA. This Edwardsiella ictaluri (strain 93-146) protein is tRNA (guanine-N(7)-)-methyltransferase.